Consider the following 1642-residue polypeptide: Cortactin-binding protein 2 (1642 aa).

Disordered regions lie at residues 1–27, 203–222, 366–433, 446–471, and 491–611; these read MATDGASCEPDFSRAPEDAAGAPAEAA, KKKTSALEEELATEKRRSTE, IGAS…HPGL, GSNANDPDQNGNTTQSPPSRDVSPTS, and RFTS…PSID. Residues 119–276 adopt a coiled-coil conformation; that stretch reads RKMQERMSTQ…EQLKRGTDSK (158 aa). Residues 385–394 are compositionally biased toward polar residues; that stretch reads GPSTGSTADL. The segment covering 395–407 has biased composition (low complexity); that stretch reads TSSPTPVPSTVSP. Position 491 is an asymmetric dimethylarginine (Arg491). The span at 497 to 506 shows a compositional bias: pro residues; that stretch reads AGAPPRPGAP. The segment covering 576–586 has biased composition (polar residues); the sequence is TVASPPSTLPQ. ANK repeat units follow at residues 702–732, 736–765, 769–798, 802–831, 835–864, and 904–934; these read GRPTLLQQAAAQGNVTLLSMLLNEEGLDINY, DGHSALYSAAKNGHTDCVRLLLNAEAQVNV, NGFTPLCAAAAQGHFKCVELLIAYDANINH, GGQTPLYLACKNGNKECIKLLLEAGTDRSV, DGWTPIHAAVDTGNVDSLKLLMYHRAPAHG, and EGWTAAHIAASKGFKNCLEVLCRHGGLEPER. The segment at 1440 to 1469 is disordered; sequence ESGAWRKVSTSPRKKSGRFSSPTWNKPDLS. Ser1513 carries the phosphoserine modification. Positions 1546 to 1642 are disordered; it reads RRFDSSGNNP…NSRDLEPTQK (97 aa). 2 stretches are compositionally biased toward polar residues: residues 1552-1563 and 1571-1588; these read GNNPVFSATVNN and KEVSPLSSHQTTECSNSK. The span at 1613–1627 shows a compositional bias: low complexity; it reads SQNTKRSSSSSNTRQ.

In terms of assembly, interacts with CTTN/cortactin SH3 domain. Interacts with STRN, STRN4/zinedin and MOB4/phocein; this interactions mediate the association with the STRIPAK core complex and may regulate dendritic spine distribution of the STRIPAK complex in hippocampal neurons. Activation of glutamate receptors weakens the interaction with STRN and STRN4.

It localises to the cytoplasm. The protein resides in the cell cortex. Its subcellular location is the cell projection. The protein localises to the dendritic spine. Regulates the dendritic spine distribution of CTTN/cortactin in hippocampal neurons, and thus controls dendritic spinogenesis and dendritic spine maintenance. Associates with the striatin-interacting phosphatase and kinase (STRIPAK) core complex to regulate dendritic spine distribution of the STRIPAK complex in hippocampal neurons. The chain is Cortactin-binding protein 2 (CTTNBP2) from Muntiacus reevesi (Reeves' muntjac).